Reading from the N-terminus, the 951-residue chain is Kinase suppressor of Ras 2 (951 aa).

The disordered stretch occupies residues 237–298 (PPPPPLESGH…PGTPPPSSRK (62 aa)). Residues 260-274 (RTPPRTPNIVTTVTP) are compositionally biased toward low complexity. A phosphothreonine mark is found at Thr-273 and Thr-277. The segment at 413–457 (KHRFSTKYWMSQTCTVCGKGMLFGLKCKNCKLKCHNKCTKEAPPC) adopts a Phorbol-ester/DAG-type zinc-finger fold. Zn(2+) contacts are provided by His-414, Cys-426, Cys-429, Cys-439, Cys-442, His-447, Cys-450, and Cys-457. Ser-475 is subject to Phosphoserine; by MARK3. 2 disordered regions span residues 489–559 (RYSD…QKKN) and 614–634 (EPTS…DEFE). The segment covering 494 to 503 (HISQTLPKTN) has biased composition (polar residues). A Phosphothreonine modification is found at Thr-498. Residues 518–531 (SSSNPSSTTSSTPS) show a composition bias toward low complexity. Residues 532 to 552 (SPAPPLPPSATPPSPLHPSPQ) show a composition bias toward pro residues. In terms of domain architecture, Protein kinase spans 667–932 (LEIGELIGKG…TKLMDMLEKL (266 aa)). 673–681 (IGKGRFGQV) contacts ATP. The active-site Proton donor/acceptor is Asp-787. Lys-789 and Asp-804 together coordinate ATP.

It belongs to the protein kinase superfamily. TKL Ser/Thr protein kinase family. Heterodimerizes (via N-terminus) with BRAF (via N-terminus) in a MAP2K1/MEK1-dependent manner. Interacts with BRAF; this increases the low intrinsic protein kinase activity of KSR2. Interacts with MAP2K1, forming a heterodimer that can dimerize to form a heterotetramer. Interacts with MAP3K8, MAPK, RAS and RAF. Phosphorylated on Ser-475 by MARK3.

It is found in the cytoplasm. The protein localises to the membrane. It carries out the reaction L-seryl-[protein] + ATP = O-phospho-L-seryl-[protein] + ADP + H(+). It catalyses the reaction L-threonyl-[protein] + ATP = O-phospho-L-threonyl-[protein] + ADP + H(+). Functionally, location-regulated scaffold connecting MEK to RAF. Has very low protein kinase activity and can phosphorylate MAP2K1 at several Ser and Thr residues with very low efficiency (in vitro). Acts as MAP2K1/MEK1-dependent allosteric activator of BRAF; upon binding to MAP2K1/MEK1, dimerizes with BRAF and promotes BRAF-mediated phosphorylation of MAP2K1/MEK1. Interaction with BRAF enhances KSR2-mediated phosphorylation of MAP2K1 (in vitro). Blocks MAP3K8 kinase activity and MAP3K8-mediated signaling. Acts as a negative regulator of MAP3K3-mediated activation of ERK, JNK and NF-kappa-B pathways, inhibiting MAP3K3-mediated interleukin-8 production. In Mus musculus (Mouse), this protein is Kinase suppressor of Ras 2.